Consider the following 218-residue polypeptide: Phosphatidylserine decarboxylase proenzyme (218 aa).

Ser-187 serves as the catalytic Schiff-base intermediate with substrate; via pyruvic acid. Ser-187 carries the pyruvic acid (Ser); by autocatalysis modification.

It belongs to the phosphatidylserine decarboxylase family. PSD-A subfamily. In terms of assembly, heterodimer of a large membrane-associated beta subunit and a small pyruvoyl-containing alpha subunit. It depends on pyruvate as a cofactor. In terms of processing, is synthesized initially as an inactive proenzyme. Formation of the active enzyme involves a self-maturation process in which the active site pyruvoyl group is generated from an internal serine residue via an autocatalytic post-translational modification. Two non-identical subunits are generated from the proenzyme in this reaction, and the pyruvate is formed at the N-terminus of the alpha chain, which is derived from the carboxyl end of the proenzyme. The post-translation cleavage follows an unusual pathway, termed non-hydrolytic serinolysis, in which the side chain hydroxyl group of the serine supplies its oxygen atom to form the C-terminus of the beta chain, while the remainder of the serine residue undergoes an oxidative deamination to produce ammonia and the pyruvoyl prosthetic group on the alpha chain.

The protein localises to the cell membrane. The catalysed reaction is a 1,2-diacyl-sn-glycero-3-phospho-L-serine + H(+) = a 1,2-diacyl-sn-glycero-3-phosphoethanolamine + CO2. The protein operates within phospholipid metabolism; phosphatidylethanolamine biosynthesis; phosphatidylethanolamine from CDP-diacylglycerol: step 2/2. Its function is as follows. Catalyzes the formation of phosphatidylethanolamine (PtdEtn) from phosphatidylserine (PtdSer). The chain is Phosphatidylserine decarboxylase proenzyme from Geobacter metallireducens (strain ATCC 53774 / DSM 7210 / GS-15).